The chain runs to 446 residues: Alpha-1,6-mannosyl-glycoprotein 2-beta-N-acetylglucosaminyltransferase (446 aa).

At 1–9 (MRFRIYKRK) the chain is on the cytoplasmic side. Residues 10-29 (VLILTFVVAACGFVLWSSNG) form a helical; Signal-anchor for type II membrane protein membrane-spanning segment. Topologically, residues 30 to 446 (RQRKNEALAP…ELCKSYRRLQ (417 aa)) are lumenal. N-linked (GlcNAc...) asparagine glycosylation is found at N69 and N86. Residues 123–127 (QVHNR) and D154 each bind substrate. Residues C196 and C210 are joined by a disulfide bond. 229 to 233 (QTKHH) contacts substrate. D261 serves as a coordination point for Mn(2+). A disulfide bridge connects residues C283 and C286. Substrate is bound at residue R298. Intrachain disulfides connect C334–C357, C339–C439, and C378–C386. H374 serves as a coordination point for Mn(2+).

It belongs to the glycosyltransferase 16 (GT16) protein family. In terms of assembly, homodimer. It depends on Mn(2+) as a cofactor.

The protein resides in the golgi apparatus membrane. The enzyme catalyses an N(4)-{beta-D-GlcNAc-(1-&gt;2)-alpha-D-Man-(1-&gt;3)-[alpha-D-Man-(1-&gt;6)]-beta-D-Man-(1-&gt;4)-beta-D-GlcNAc-(1-&gt;4)-beta-D-GlcNAc}-L-asparaginyl-[protein] + UDP-N-acetyl-alpha-D-glucosamine = N(4)-{beta-D-GlcNAc-(1-&gt;2)-alpha-D-Man-(1-&gt;3)-[beta-D-GlcNAc-(1-&gt;2)-alpha-D-Man-(1-&gt;6)]-beta-D-Man-(1-&gt;4)-beta-D-GlcNAc-(1-&gt;4)-beta-D-GlcNAc}-L-asparaginyl-[protein] + UDP + H(+). It participates in protein modification; protein glycosylation. Plays an essential role in protein N-glycosylation. Catalyzes the transfer of N-acetylglucosamine (GlcNAc) onto the free terminal mannose moiety in the core structure of the nascent N-linked glycan chain, giving rise to the second branch in complex glycans. The chain is Alpha-1,6-mannosyl-glycoprotein 2-beta-N-acetylglucosaminyltransferase (MGAT2) from Sus scrofa (Pig).